The chain runs to 1023 residues: GATOR2 complex protein WDR24 (1023 aa).

WD repeat units lie at residues 16-54 (NLGSPLSAISSSPDSTKLIVAGRDIVKIVSVQNNEFKVT), 64-108 (SLNY…SKSV), 114-154 (DHSR…NASK), 159-199 (PKSE…IAVE), 203-243 (SHQG…SLNN), 245-287 (STIS…IPLF), and 291-329 (DHRDVPTGLIWKSPSSLISCSKDSHLLLNEFQDSYKPYQ). A compositionally biased stretch (low complexity) spans 563-578 (SKNIIDNSNDSNQEIN). Disordered stretches follow at residues 563–621 (SKNI…EPPS) and 661–824 (QKST…SIEN). Acidic residues predominate over residues 584–593 (KEDEEEDDDN). A compositionally biased stretch (polar residues) spans 661-681 (QKSTDNISDNNSNVHVNIKRQ). Over residues 682 to 695 (NQPTNNNNNNSNID) the composition is skewed to low complexity. The span at 696–742 (NLEKKSNKSKSTKENKESSLTDQNKQKRNDNKEKIDNNEIDNDNKDN) shows a compositional bias: basic and acidic residues. Residues 743-759 (NDDDDNDVDNIGEDNDE) show a composition bias toward acidic residues. The span at 760–812 (INNNNDNNNNNNNNNNNNNNNNNNNNNNNNNNNNNNNNKNNNNDNNNNNNINN) shows a compositional bias: low complexity. The segment at 947 to 969 (ACSSCGKSIPQNSIICEKCNKAS) adopts a C4-type zinc-finger fold. Positions 948, 951, 962, 965, 972, 975, 986, 989, 991, 994, 997, 1010, 1014, 1016, and 1018 each coordinate Zn(2+). The segment at 970 to 1021 (SKCSICRLPVKGMWVWCQGCGHGGHLEHMKSWFIDKNQKSCPTGCTHICTPF) adopts an RING-type; atypical zinc-finger fold.

It belongs to the WD repeat WDR24 family. In terms of assembly, probably part of the GATOR complex.

The protein resides in the lysosome membrane. It carries out the reaction S-ubiquitinyl-[E2 ubiquitin-conjugating enzyme]-L-cysteine + [acceptor protein]-L-lysine = [E2 ubiquitin-conjugating enzyme]-L-cysteine + N(6)-ubiquitinyl-[acceptor protein]-L-lysine.. Its pathway is protein modification; protein ubiquitination. As a component of the GATOR complex may function in the amino acid-sensing branch of the TORC1 signaling pathway. This is GATOR2 complex protein WDR24 from Dictyostelium discoideum (Social amoeba).